The primary structure comprises 811 residues: Lysine-specific histone demethylase 1 homolog 3 (811 aa).

A compositionally biased stretch (pro residues) spans 1–10 (MSDQPPPYTP). Residues 1–79 (MSDQPPPYTP…PSAQPPPRAS (79 aa)) form a disordered region. The segment covering 44–55 (NKRKRTGFRRKL) has biased composition (basic residues). Low complexity predominate over residues 56-71 (PSGSPAAPVAVAASPS). The SWIRM domain maps to 88-189 (NREPTAEAVT…FGVAPAIKER (102 aa)). Residues E227, R229, R235, and E609 each contribute to the FAD site. Residues 790-811 (RNSSRTKTRPSKLKIGIPKSKS) form a disordered region.

The protein belongs to the flavin monoamine oxidase family. FAD serves as cofactor.

Probable histone demethylase. The chain is Lysine-specific histone demethylase 1 homolog 3 from Oryza sativa subsp. indica (Rice).